Here is a 302-residue protein sequence, read N- to C-terminus: UDP-N-acetylenolpyruvoylglucosamine reductase (302 aa).

Residues 23 to 188 form the FAD-binding PCMH-type domain; the sequence is KVGGNAEIFF…LKAVFKVNKG (166 aa). The active site involves Arg-168. Residue Ser-217 is the Proton donor of the active site. Glu-287 is a catalytic residue.

The protein belongs to the MurB family. Requires FAD as cofactor.

It localises to the cytoplasm. It carries out the reaction UDP-N-acetyl-alpha-D-muramate + NADP(+) = UDP-N-acetyl-3-O-(1-carboxyvinyl)-alpha-D-glucosamine + NADPH + H(+). The protein operates within cell wall biogenesis; peptidoglycan biosynthesis. Its function is as follows. Cell wall formation. This chain is UDP-N-acetylenolpyruvoylglucosamine reductase, found in Rickettsia bellii (strain RML369-C).